The following is a 441-amino-acid chain: Serum response factor-binding protein 1 (441 aa).

Coiled-coil stretches lie at residues 52–77 (KGTE…AMKE) and 118–140 (LLKK…RQSA). 3 disordered regions span residues 137–342 (RQSA…RNDK), 357–389 (FHSL…EPPV), and 406–441 (QTMQ…TFDD). A compositionally biased stretch (low complexity) spans 139-152 (SAPAAESSESTSGE). Residues 153–183 (GRCKDIARSKDDARESQHPERTVVREQKAKD) are compositionally biased toward basic and acidic residues. Lys201 participates in a covalent cross-link: Glycyl lysine isopeptide (Lys-Gly) (interchain with G-Cter in SUMO2). The residue at position 214 (Ser214) is a Phosphoserine. The segment covering 237 to 246 (DSNQGKASTK) has biased composition (polar residues). Residues 269-282 (EKEYFDDSTEERFY) are compositionally biased toward basic and acidic residues. 3 positions are modified to phosphoserine: Ser276, Ser291, and Ser293. Over residues 308–321 (KESGVHSSAKELKP) the composition is skewed to basic and acidic residues. Residue Lys328 forms a Glycyl lysine isopeptide (Lys-Gly) (interchain with G-Cter in SUMO2) linkage. Residues 366-381 (SRRDPREQAPKNKAPD) are compositionally biased toward basic and acidic residues.

As to quaternary structure, interacts with SRF. Forms complexes with SRF and SRF cofactors ARID2, MYOCD and NKX2-5. Interacts with the N-terminus of SLC2A4. In terms of tissue distribution, highly expressed in heart, skeletal muscle, liver, kidney, testis and brain. Also expressed in white adipose tissue. Expression is up-regulated in cardiomyopathic heart.

The protein resides in the cytoplasm. It is found in the perinuclear region. May be involved in regulating transcriptional activation of cardiac genes during the aging process. May play a role in biosynthesis and/or processing of SLC2A4 in adipose cells. The protein is Serum response factor-binding protein 1 of Mus musculus (Mouse).